The sequence spans 222 residues: MLSRGVCGTSRQLAPALGYLGSRQKHSLPDLPYDYGALEPHINAQIMQLHHSKHHAAYVNNLNVTEEKYQEALAKGDVTAQIALQPALKFNGGGHINHSIFWTNLSPNGGGEPKGELLEAIKRDFGSFDKFKEKLTAASVGVQGSGWGWLGFNKERGHLQIAACPNQDPLQGTTGLIPLLGIDVWEHAYYLQYKNVRPDYLKAIWNVINWENVTERYMACKK.

A mitochondrion-targeting transit peptide spans Met-1 to Gln-24. Position 50 (His-50) interacts with Mn(2+). Tyr-58 is subject to 3'-nitrotyrosine. An N6-acetyllysine; alternate mark is found at Lys-68 and Lys-75. 2 positions are modified to N6-succinyllysine; alternate: Lys-68 and Lys-75. His-98 is a binding site for Mn(2+). Position 114 is an N6-acetyllysine (Lys-114). An N6-acetyllysine; alternate mark is found at Lys-122 and Lys-130. Residues Lys-122 and Lys-130 each carry the N6-succinyllysine; alternate modification. Residues Asp-183 and His-187 each coordinate Mn(2+). Lys-202 carries the N6-acetyllysine modification.

Belongs to the iron/manganese superoxide dismutase family. As to quaternary structure, homotetramer. The cofactor is Mn(2+). Post-translationally, nitrated under oxidative stress. Nitration coupled with oxidation inhibits the catalytic activity. In terms of processing, acetylation at Lys-122 decreases enzymatic activity. Deacetylated by SIRT3 upon exposure to ionizing radiations or after long fasting. Polyubiquitinated; leading to proteasomal degradation. Deubiquitinated by USP36 which increases protein stability.

The protein localises to the mitochondrion matrix. It catalyses the reaction 2 superoxide + 2 H(+) = H2O2 + O2. In terms of biological role, destroys superoxide anion radicals which are normally produced within the cells and which are toxic to biological systems. The polypeptide is Superoxide dismutase [Mn], mitochondrial (SOD2) (Pongo pygmaeus (Bornean orangutan)).